The chain runs to 330 residues: NADH-quinone oxidoreductase subunit H (330 aa).

Helical transmembrane passes span 11 to 31 (ILVA…CGAL), 81 to 101 (FIFV…FAII), 114 to 134 (IGIL…LFAG), 154 to 174 (ISYE…VGSF), 187 to 207 (LWFI…GVAV), 238 to 258 (FFVG…TLFF), 270 to 290 (QIPF…FILL), and 309 to 329 (FCLP…LAAA).

The protein belongs to the complex I subunit 1 family. In terms of assembly, NDH-1 is composed of 13 different subunits. Subunits NuoA, H, J, K, L, M, N constitute the membrane sector of the complex.

Its subcellular location is the cell inner membrane. The catalysed reaction is a quinone + NADH + 5 H(+)(in) = a quinol + NAD(+) + 4 H(+)(out). Its function is as follows. NDH-1 shuttles electrons from NADH, via FMN and iron-sulfur (Fe-S) centers, to quinones in the respiratory chain. The immediate electron acceptor for the enzyme in this species is believed to be ubiquinone. Couples the redox reaction to proton translocation (for every two electrons transferred, four hydrogen ions are translocated across the cytoplasmic membrane), and thus conserves the redox energy in a proton gradient. This subunit may bind ubiquinone. This Ectopseudomonas mendocina (strain ymp) (Pseudomonas mendocina) protein is NADH-quinone oxidoreductase subunit H.